A 930-amino-acid chain; its full sequence is Protein translocase subunit SecA (930 aa).

Residues glutamine 83, 101–105, and aspartate 491 contribute to the ATP site; that span reads GEGKT.

It belongs to the SecA family. As to quaternary structure, monomer and homodimer. Part of the essential Sec protein translocation apparatus which comprises SecA, SecYEG and auxiliary proteins SecDF. Other proteins may also be involved.

It localises to the cell inner membrane. The protein localises to the cellular thylakoid membrane. It is found in the cytoplasm. The catalysed reaction is ATP + H2O + cellular proteinSide 1 = ADP + phosphate + cellular proteinSide 2.. In terms of biological role, part of the Sec protein translocase complex. Interacts with the SecYEG preprotein conducting channel. Has a central role in coupling the hydrolysis of ATP to the transfer of proteins into and across the cell membrane, serving as an ATP-driven molecular motor driving the stepwise translocation of polypeptide chains across the membrane. Functionally, probably participates in protein translocation into and across both the cytoplasmic and thylakoid membranes in cyanobacterial cells. The chain is Protein translocase subunit SecA from Trichormus variabilis (strain ATCC 29413 / PCC 7937) (Anabaena variabilis).